We begin with the raw amino-acid sequence, 168 residues long: ATP synthase subunit b, chloroplastic (168 aa).

The chain crosses the membrane as a helical span at residues 20-37 (LNLAVVLPIVFTLGRDTL).

It belongs to the ATPase B chain family. As to quaternary structure, F-type ATPases have 2 components, F(1) - the catalytic core - and F(0) - the membrane proton channel. F(1) has five subunits: alpha(3), beta(3), gamma(1), delta(1), epsilon(1). F(0) has four main subunits: a(1), b(1), b'(1) and c(10-14). The alpha and beta chains form an alternating ring which encloses part of the gamma chain. F(1) is attached to F(0) by a central stalk formed by the gamma and epsilon chains, while a peripheral stalk is formed by the delta, b and b' chains.

The protein resides in the plastid. It localises to the chloroplast thylakoid membrane. Functionally, f(1)F(0) ATP synthase produces ATP from ADP in the presence of a proton or sodium gradient. F-type ATPases consist of two structural domains, F(1) containing the extramembraneous catalytic core and F(0) containing the membrane proton channel, linked together by a central stalk and a peripheral stalk. During catalysis, ATP synthesis in the catalytic domain of F(1) is coupled via a rotary mechanism of the central stalk subunits to proton translocation. Its function is as follows. Component of the F(0) channel, it forms part of the peripheral stalk, linking F(1) to F(0). This Ostreococcus tauri protein is ATP synthase subunit b, chloroplastic.